Here is a 287-residue protein sequence, read N- to C-terminus: Putative daunorubicin C-13 ketoreductase DnrU (287 aa).

Residue 24–30 (GATSGIG) coordinates NADP(+). Serine 149 contributes to the substrate binding site. Tyrosine 175 serves as the catalytic Proton acceptor.

The protein belongs to the short-chain dehydrogenases/reductases (SDR) family.

Its function is as follows. Could reduce the 13-carbonyl of daunorubicin to produce (13S)-13-dihydrodaunorubicin. Could also be able to reduce the 13-carbonyl of doxorubicin. The polypeptide is Putative daunorubicin C-13 ketoreductase DnrU (Streptomyces sp. (strain C5)).